We begin with the raw amino-acid sequence, 1073 residues long: TSC22 domain family protein 1 (1073 aa).

The required for interaction with TGFBR1 and promotion of TGF-beta signaling stretch occupies residues 1–98; sequence MHQPPESTAA…SQAQLQAQPL (98 aa). 6 disordered regions span residues 22–110, 125–205, 220–288, 458–486, 607–628, and 742–766; these read MAHP…KKSG, ISSN…PHLP, LHHH…SPAS, VTSE…SVGS, YSQA…QQLQ, and VQQP…QVVP. A compositionally biased stretch (low complexity) spans 36–45; sequence GSASALNAAG. Over residues 58-70 the composition is skewed to pro residues; that stretch reads FPPPSLLQPPPPA. Over residues 84–100 the composition is skewed to low complexity; that stretch reads SLNLLSQAQLQAQPLAP. Positions 133–142 are enriched in acidic residues; it reads EDTESYDDLD. The span at 220 to 240 shows a compositional bias: basic residues; sequence LHHHHQIHHGHHLQHGHHHPS. The segment covering 257–271 has biased composition (polar residues); sequence PVSRKLSTTGSSDSI. Ser263 is modified (phosphoserine). Composition is skewed to low complexity over residues 272–288 and 465–483; these read TPVA…SPAS and TSGS…YTES. Pro residues predominate over residues 614 to 625; the sequence is VQTPLPGAPPPQ. Polar residues predominate over residues 742–764; it reads VQQPSTQVPPSVIQQGAPPSSQV. Residues 1006–1027 are leucine-zipper; it reads LKEQIKELIEKNSQLEQENNLL. Residues 1037–1073 are disordered; the sequence is AQFQAQLQTGSPPATTQPQGTTQPPAQPASQGSGPTA. Residues 1044–1073 are compositionally biased toward low complexity; it reads QTGSPPATTQPQGTTQPPAQPASQGSGPTA.

Belongs to the TSC-22/Dip/Bun family. Forms homodimers. Forms heterodimers. Component of a complex composed of TSC22D1 (via N-terminus), TGFBR1 and TGFBR2; the interaction between TSC22D1 and TGFBR1 is inhibited by SMAD7 and promoted by TGFB1. Interacts with SMAD7; the interaction requires TGF-beta and the interaction is inhibited by TGFBR1. Interacts with TPT1/fortilin; interaction results in the destabilization of TSC22D1 protein and prevents TSC22D1-mediated apoptosis. Interacts with SMAD4 (via N-terminus). Interacts with ACVRL1/ALK1, ACVR1/ALK2, BMPR1A/ALK3, ACVR1B/ALK4, BMPR1B/ALK6, ACVR2A/ACTRII, and BMPR2. Interacts with SMAD6. Interacts with TFE3; the interaction is enhanced in the presence of TGF-beta. As to quaternary structure, forms a heterodimer with TSC22D4/THG1. In terms of assembly, forms a heterodimer with TSC22D4/THG1. Interacts with histone H1-2. Interacts with GNL3. Interacts with histone H1-2. In terms of tissue distribution, ubiquitously expressed in adult tissues. Expressed in the postmitotic epithelial compartment at the top of intestinal mucosal villi.

The protein localises to the cytoplasm. It localises to the nucleus. The protein resides in the cell membrane. Its subcellular location is the mitochondrion. Functionally, transcriptional repressor. Acts on the C-type natriuretic peptide (CNP) promoter. Acts to promote CASP3-mediated apoptosis. Positively regulates TGF-beta signaling by interacting with SMAD7 which inhibits binding of SMAD7 to TGFBR1, preventing recruitment of SMURF ubiquitin ligases to TGFBR1 and inhibiting SMURF-mediated ubiquitination and degradation of TGFBR1. Contributes to enhancement of TGF-beta signaling by binding to and modulating the transcription activator activity of SMAD4. Promotes TGF-beta-induced transcription of COL1A2; via its interaction with TFE3 at E-boxes in the gene proximal promoter. Plays a role in the repression of hematopoietic precursor cell growth. Promotes IL2 deprivation-induced apoptosis in T-lymphocytes, via repression of TSC22D3/GILZ transcription and activation of the caspase cascade. Its function is as follows. May act to negatively regulate TGFB3 signaling and thereby inhibit cell death in mammary gland cells. In terms of biological role, positively regulates cell death in response to TGFB3 during mammary gland involution. The protein is TSC22 domain family protein 1 of Homo sapiens (Human).